Here is a 148-residue protein sequence, read N- to C-terminus: Probable 4-amino-4-deoxy-L-arabinose-phosphoundecaprenol flippase subunit ArnF (148 aa).

Residues 1-23 are Cytoplasmic-facing; that stretch reads MRGDNTGVGKEPAVTERPAIKGY. The chain crosses the membrane as a helical span at residues 24-44; that stretch reads LYVLGSILLVTLAQLAMKWGV. Residues 45-63 lie on the Periplasmic side of the membrane; sequence MQLPAWQASLDIMLAHPVP. The chain crosses the membrane as a helical span at residues 64–84; that stretch reads LLVITAGVGCYALSLLCWLAA. The Cytoplasmic segment spans residues 85–91; it reads LHFTPLN. Residues 92–112 form a helical membrane-spanning segment; sequence IAYPLLSTSYALVYLLAVSIP. Residues 113-117 are Periplasmic-facing; it reads SFAEP. A helical membrane pass occupies residues 118-138; sequence LEPGKAVGVIFILLGAVLVGI. The Cytoplasmic segment spans residues 139 to 148; it reads KPVGRKRNAH.

The protein belongs to the ArnF family. Heterodimer of ArnE and ArnF.

It is found in the cell inner membrane. Its pathway is bacterial outer membrane biogenesis; lipopolysaccharide biosynthesis. Functionally, translocates 4-amino-4-deoxy-L-arabinose-phosphoundecaprenol (alpha-L-Ara4N-phosphoundecaprenol) from the cytoplasmic to the periplasmic side of the inner membrane. This is Probable 4-amino-4-deoxy-L-arabinose-phosphoundecaprenol flippase subunit ArnF from Aeromonas salmonicida (strain A449).